Here is a 298-residue protein sequence, read N- to C-terminus: ATP phosphoribosyltransferase (298 aa).

Belongs to the ATP phosphoribosyltransferase family. Long subfamily. The cofactor is Mg(2+).

The protein resides in the cytoplasm. It carries out the reaction 1-(5-phospho-beta-D-ribosyl)-ATP + diphosphate = 5-phospho-alpha-D-ribose 1-diphosphate + ATP. It functions in the pathway amino-acid biosynthesis; L-histidine biosynthesis; L-histidine from 5-phospho-alpha-D-ribose 1-diphosphate: step 1/9. Feedback inhibited by histidine. Its function is as follows. Catalyzes the condensation of ATP and 5-phosphoribose 1-diphosphate to form N'-(5'-phosphoribosyl)-ATP (PR-ATP). Has a crucial role in the pathway because the rate of histidine biosynthesis seems to be controlled primarily by regulation of HisG enzymatic activity. The polypeptide is ATP phosphoribosyltransferase (Vibrio campbellii (strain ATCC BAA-1116)).